The following is a 924-amino-acid chain: TBC1 domain family member 30 (924 aa).

Residues 1–11 (MDVLPTGGGRP) show a composition bias toward gly residues. Disordered stretches follow at residues 1–76 (MDVL…GRTS) and 94–134 (EEEE…RSGA). Residues 47–59 (GAAERPRRSRDTW) show a composition bias toward basic and acidic residues. The Rab-GAP TBC domain maps to 249 to 457 (GIPKEWRRKV…KIWDSVFFEG (209 aa)). Disordered regions lie at residues 541 to 564 (KPTSVSGRHSKARDSDEENDPDDE), 776 to 806 (GCTATAGREGSSPEGSTRRTIEGQSPEPVFG), and 838 to 924 (HPPC…TKKR). A compositionally biased stretch (acidic residues) spans 555–564 (SDEENDPDDE). Phosphoserine is present on Ser-800. A compositionally biased stretch (polar residues) spans 858 to 870 (TSKAPQGSNSKTP). The segment covering 914 to 924 (PGGGNSGTKKR) has biased composition (gly residues).

The protein localises to the cell membrane. Functionally, may act as a GTPase-activating protein for Rab family protein(s). This Homo sapiens (Human) protein is TBC1 domain family member 30 (TBC1D30).